A 164-amino-acid chain; its full sequence is NADH-quinone oxidoreductase subunit I (164 aa).

4Fe-4S ferredoxin-type domains lie at 56-85 (RRYE…IEAE) and 95-124 (TRYD…EGPN). Positions 65, 68, 71, 75, 104, 107, 110, and 114 each coordinate [4Fe-4S] cluster.

It belongs to the complex I 23 kDa subunit family. As to quaternary structure, NDH-1 is composed of 14 different subunits. Subunits NuoA, H, J, K, L, M, N constitute the membrane sector of the complex. Requires [4Fe-4S] cluster as cofactor.

The protein localises to the cell inner membrane. It carries out the reaction a quinone + NADH + 5 H(+)(in) = a quinol + NAD(+) + 4 H(+)(out). In terms of biological role, NDH-1 shuttles electrons from NADH, via FMN and iron-sulfur (Fe-S) centers, to quinones in the respiratory chain. The immediate electron acceptor for the enzyme in this species is believed to be ubiquinone. Couples the redox reaction to proton translocation (for every two electrons transferred, four hydrogen ions are translocated across the cytoplasmic membrane), and thus conserves the redox energy in a proton gradient. This chain is NADH-quinone oxidoreductase subunit I, found in Anaplasma phagocytophilum (strain HZ).